Consider the following 156-residue polypeptide: Small ribosomal subunit protein uS7 (156 aa).

This sequence belongs to the universal ribosomal protein uS7 family. Part of the 30S ribosomal subunit. Contacts proteins S9 and S11.

One of the primary rRNA binding proteins, it binds directly to 16S rRNA where it nucleates assembly of the head domain of the 30S subunit. Is located at the subunit interface close to the decoding center, probably blocks exit of the E-site tRNA. In Methylocella silvestris (strain DSM 15510 / CIP 108128 / LMG 27833 / NCIMB 13906 / BL2), this protein is Small ribosomal subunit protein uS7.